The following is a 142-amino-acid chain: Hemoglobin cathodic subunit alpha (142 aa).

Position 1 is an N-acetylserine (S1). The Globin domain maps to 1-142 (SLTAKDKALV…LSSTAADKYR (142 aa)). H59 contributes to the O2 binding site. Residue H88 coordinates heme b.

It belongs to the globin family. In terms of assembly, heterotetramer of two alpha chains and two beta chains.

In terms of biological role, involved in oxygen transport from gills to the various peripheral tissues. The chain is Hemoglobin cathodic subunit alpha from Hoplosternum littorale (Hassar).